A 371-amino-acid chain; its full sequence is MTFSPEPAYQHGQAPRTAILLVNLGTPDAPTPKAVGRYLKEFLSDPRVVEIPRLAWLPLLYGVILPLRARASALKYESIWLREAHMTGSPLLVYSERQAHALQRLLNQQGYELTVACAMRYGNPSIASVLEALRRQGTEQVLVLPMYPQYSGTTTATAFDEVFRVLGQWRNQPEIRLVKHFHDHPAYIAALHQQVGAYWAQHGTPDFARGDKLILSFHGVPRRTLELGDPYHCECLKTGRLLGDALGLQPGQYQVTFQSRFGKAEWLQPYTAPTLAELGKVGAGRVDVFCPGFPADCIETLEEIAMEGQTEFMVAGGKTFHFIPCMNDAQPWISALAEIALQHVQGWPLNMPHAHELEARRSRAQTRGAAA.

Residues H218 and E299 each contribute to the Fe cation site.

It belongs to the ferrochelatase family.

It is found in the cytoplasm. The enzyme catalyses heme b + 2 H(+) = protoporphyrin IX + Fe(2+). The protein operates within porphyrin-containing compound metabolism; protoheme biosynthesis; protoheme from protoporphyrin-IX: step 1/1. Functionally, catalyzes the ferrous insertion into protoporphyrin IX. This chain is Ferrochelatase, found in Cupriavidus pinatubonensis (strain JMP 134 / LMG 1197) (Cupriavidus necator (strain JMP 134)).